Reading from the N-terminus, the 314-residue chain is UDP-N-acetylenolpyruvoylglucosamine reductase (314 aa).

Residues Lys27–Ala192 enclose the FAD-binding PCMH-type domain. Arg171 is a catalytic residue. Ser223 serves as the catalytic Proton donor. Residue Glu293 is part of the active site.

This sequence belongs to the MurB family. The cofactor is FAD.

The protein localises to the cytoplasm. It carries out the reaction UDP-N-acetyl-alpha-D-muramate + NADP(+) = UDP-N-acetyl-3-O-(1-carboxyvinyl)-alpha-D-glucosamine + NADPH + H(+). It functions in the pathway cell wall biogenesis; peptidoglycan biosynthesis. Functionally, cell wall formation. In Caldicellulosiruptor bescii (strain ATCC BAA-1888 / DSM 6725 / KCTC 15123 / Z-1320) (Anaerocellum thermophilum), this protein is UDP-N-acetylenolpyruvoylglucosamine reductase.